Reading from the N-terminus, the 82-residue chain is Small ribosomal subunit protein bS16 (82 aa).

This sequence belongs to the bacterial ribosomal protein bS16 family.

In Clostridium botulinum (strain Okra / Type B1), this protein is Small ribosomal subunit protein bS16.